Here is a 250-residue protein sequence, read N- to C-terminus: Ribosomal RNA small subunit methyltransferase G (250 aa).

Residues glycine 78, leucine 83, 129 to 130, and arginine 144 contribute to the S-adenosyl-L-methionine site; that span reads AE. Residues 224 to 250 form a disordered region; sequence IAAPRKRGGQQRRAGHARGTSNRRRGT. A compositionally biased stretch (basic residues) spans 227–250; it reads PRKRGGQQRRAGHARGTSNRRRGT.

This sequence belongs to the methyltransferase superfamily. RNA methyltransferase RsmG family.

The protein resides in the cytoplasm. Its function is as follows. Specifically methylates the N7 position of guanine in position 518 of 16S rRNA. In Nocardioides sp. (strain ATCC BAA-499 / JS614), this protein is Ribosomal RNA small subunit methyltransferase G.